A 246-amino-acid chain; its full sequence is Ribonuclease PH (246 aa).

Phosphate-binding positions include Arg91 and 129 to 131 (GTR).

Belongs to the RNase PH family. As to quaternary structure, homohexameric ring arranged as a trimer of dimers.

It carries out the reaction tRNA(n+1) + phosphate = tRNA(n) + a ribonucleoside 5'-diphosphate. Functionally, phosphorolytic 3'-5' exoribonuclease that plays an important role in tRNA 3'-end maturation. Removes nucleotide residues following the 3'-CCA terminus of tRNAs; can also add nucleotides to the ends of RNA molecules by using nucleoside diphosphates as substrates, but this may not be physiologically important. Probably plays a role in initiation of 16S rRNA degradation (leading to ribosome degradation) during starvation. The polypeptide is Ribonuclease PH (Paraburkholderia phytofirmans (strain DSM 17436 / LMG 22146 / PsJN) (Burkholderia phytofirmans)).